The primary structure comprises 234 residues: MQFEPALQQGRLVKRYKRFLADIKLADGSEMTIHCPNTGSMRNCLFPGEAVWFSTSANPKRKYAYTWELMGTPNGGFIGIHSGSANALAEEAIHSGIIKELTGYDTLSREVKYGDENSRIDILLQGAQKPDCYIEVKSCTLLEDGQGFFPDAVSLRGQKHLRELMHMANLGHRAVLLFVVQHSEIFSVAPAAHIDHEYANLLKKATLSGVEVLAYRCEMSPTEIRLAQACPVRV.

Belongs to the SfsA family.

This chain is Sugar fermentation stimulation protein homolog, found in Shewanella putrefaciens (strain CN-32 / ATCC BAA-453).